A 507-amino-acid chain; its full sequence is Protein adenylyltransferase fic-1 (507 aa).

A helical membrane pass occupies residues 40–56 (YSLTTVVLVSLVVTLVC). 2 TPR repeats span residues 146–179 (AILA…APNN) and 180–213 (PQIL…DPGN). The short motif at 269-274 (TVAIEG) is the Inhibitory (S/T)XXXE(G/N) motif element. An ATP-binding site is contributed by glutamate 273. Positions 325 to 460 (ISIDDILEMH…LRPFVRYVAK (136 aa)) constitute a Fido domain. At threonine 351 the chain carries O-AMP-threonine; by autocatalysis. 356–359 (VGKF) lines the ATP pocket. Histidine 403 is a catalytic residue. ATP-binding positions include 407-414 (DGNGRTAR), 439-440 (YY), and asparagine 447. Position 475 is an O-AMP-threonine; by autocatalysis (threonine 475). The interval 482-507 (NGEEPNLTAEESKVSEKIETECRAGS) is disordered. The span at 491–507 (EESKVSEKIETECRAGS) shows a compositional bias: basic and acidic residues.

This sequence belongs to the fic family. Forms homodimers; homodimerization might be required for adenylyltransferase activity.

It is found in the endoplasmic reticulum membrane. The protein localises to the nucleus membrane. It carries out the reaction L-tyrosyl-[protein] + ATP = O-(5'-adenylyl)-L-tyrosyl-[protein] + diphosphate. It catalyses the reaction L-threonyl-[protein] + ATP = 3-O-(5'-adenylyl)-L-threonyl-[protein] + diphosphate. The catalysed reaction is 3-O-(5'-adenylyl)-L-threonyl-[protein] + H2O = L-threonyl-[protein] + AMP + H(+). With respect to regulation, the side chain of Glu-273 determines which of the two opposing activities (AMPylase or de-AMPylase) will take place. In response to endoplasmic reticulum stress, mediates de-AMPylase activity. Adenylyltransferase activity is inhibited by the inhibitory helix present at the N-terminus: Glu-273 binds ATP and competes with ATP-binding at Arg-414, thereby preventing adenylyltransferase activity. In unstressed cells, disengagement of Glu-273 promotes adenylyltransferase activity. Activation dissociates ATP-binding from Glu-273, allowing ordered binding of the entire ATP moiety with the alpha-phosphate in an orientation that is productive for accepting an incoming target hydroxyl side chain. Its function is as follows. Protein that can both mediate the addition of adenosine 5'-monophosphate (AMP) to specific residues of target proteins (AMPylation), and the removal of the same modification from target proteins (de-AMPylation), depending on the context. The side chain of Glu-273 determines which of the two opposing activities (AMPylase or de-AMPylase) will take place. Adenylyltransferase that mediates the addition of adenosine 5'-monophosphate (AMP) to specific residues of target proteins. In vivo target proteins include the heat-shock 70 family proteins hsp-1 and hsp-3 and the translation elongation factors eef-1A, eef-1G and eef-2. Can AMPylate core histone H3 in vitro. Can also act as a phosphodiesterase by mediating removal of ATP (de-AMPylation) from target proteins. Decreases susceptibility to P.aeruginosa-mediated killing and might therefore play a role in the innate immune response. The chain is Protein adenylyltransferase fic-1 (fic-1) from Caenorhabditis briggsae.